A 622-amino-acid chain; its full sequence is Putative E3 ubiquitin-protein ligase ORTHRUS 4 (622 aa).

Residues 12-62 (DGVCMRCQVTPPSEETLTCGTCVTPWHVSCLLPESLASSTGDWECPDCSGV) form a PHD-type zinc finger. The RING-type 1 zinc-finger motif lies at 129-169 (CSICIQLPERPVTTPCGHNFCLKCFEKWAVGQGKLTCMICR). The region spanning 258 to 407 (TRNQGVLVGE…HKMCRYLFVR (150 aa)) is the YDG domain. The RING-type 2 zinc finger occupies 498 to 555 (CQICRKVLSLPVTTPCAHNFCKACLEAKFAGITQLRDRSNGVRKLRAKKNIMTCPCCT). Residues 566-602 (QVNREMMEIIENFKKSEEEAEVAESSNISEEEEEESE) are a coiled coil. Residues 579–622 (KKSEEEAEVAESSNISEEEEEESEPPTKKIKMDNNSVGDTSLSA) form a disordered region. Residues 611–622 (DNNSVGDTSLSA) show a composition bias toward polar residues.

It localises to the nucleus. The enzyme catalyses S-ubiquitinyl-[E2 ubiquitin-conjugating enzyme]-L-cysteine + [acceptor protein]-L-lysine = [E2 ubiquitin-conjugating enzyme]-L-cysteine + N(6)-ubiquitinyl-[acceptor protein]-L-lysine.. It functions in the pathway protein modification; protein ubiquitination. In terms of biological role, E3 ubiquitin-protein ligase. May participate in CpG methylation-dependent transcriptional regulation. This Arabidopsis thaliana (Mouse-ear cress) protein is Putative E3 ubiquitin-protein ligase ORTHRUS 4 (ORTH4).